We begin with the raw amino-acid sequence, 483 residues long: UDP-N-acetylmuramate--L-alanine ligase (483 aa).

112–118 is an ATP binding site; the sequence is GTHGKTT.

The protein belongs to the MurCDEF family.

It localises to the cytoplasm. It catalyses the reaction UDP-N-acetyl-alpha-D-muramate + L-alanine + ATP = UDP-N-acetyl-alpha-D-muramoyl-L-alanine + ADP + phosphate + H(+). It participates in cell wall biogenesis; peptidoglycan biosynthesis. Its function is as follows. Cell wall formation. In Ralstonia pickettii (strain 12J), this protein is UDP-N-acetylmuramate--L-alanine ligase.